A 668-amino-acid chain; its full sequence is DNA ligase (668 aa).

NAD(+) contacts are provided by residues 31–35 (DAEYD), 80–81 (SL), and glutamate 112. The N6-AMP-lysine intermediate role is filled by lysine 114. Positions 135, 172, 289, and 313 each coordinate NAD(+). Zn(2+)-binding residues include cysteine 407, cysteine 410, cysteine 425, and cysteine 431. The 78-residue stretch at 591–668 (SVPQPLAGKV…NEEQLIELLN (78 aa)) folds into the BRCT domain.

The protein belongs to the NAD-dependent DNA ligase family. LigA subfamily. Requires Mg(2+) as cofactor. Mn(2+) serves as cofactor.

It carries out the reaction NAD(+) + (deoxyribonucleotide)n-3'-hydroxyl + 5'-phospho-(deoxyribonucleotide)m = (deoxyribonucleotide)n+m + AMP + beta-nicotinamide D-nucleotide.. DNA ligase that catalyzes the formation of phosphodiester linkages between 5'-phosphoryl and 3'-hydroxyl groups in double-stranded DNA using NAD as a coenzyme and as the energy source for the reaction. It is essential for DNA replication and repair of damaged DNA. This is DNA ligase from Aliivibrio fischeri (strain ATCC 700601 / ES114) (Vibrio fischeri).